Consider the following 403-residue polypeptide: 4-hydroxy-3-methylbut-2-enyl diphosphate reductase (403 aa).

Cysteine 66 lines the [4Fe-4S] cluster pocket. Histidine 96 is a binding site for (2E)-4-hydroxy-3-methylbut-2-enyl diphosphate. Histidine 96 contributes to the dimethylallyl diphosphate binding site. Histidine 96 provides a ligand contact to isopentenyl diphosphate. Cysteine 157 provides a ligand contact to [4Fe-4S] cluster. A (2E)-4-hydroxy-3-methylbut-2-enyl diphosphate-binding site is contributed by histidine 185. Position 185 (histidine 185) interacts with dimethylallyl diphosphate. Histidine 185 is a binding site for isopentenyl diphosphate. Residue glutamate 187 is the Proton donor of the active site. Threonine 250 contributes to the (2E)-4-hydroxy-3-methylbut-2-enyl diphosphate binding site. Cysteine 288 is a binding site for [4Fe-4S] cluster. (2E)-4-hydroxy-3-methylbut-2-enyl diphosphate is bound by residues serine 317, serine 318, asparagine 319, and serine 379. Dimethylallyl diphosphate-binding residues include serine 317, serine 318, asparagine 319, and serine 379. Isopentenyl diphosphate is bound by residues serine 317, serine 318, asparagine 319, and serine 379.

This sequence belongs to the IspH family. [4Fe-4S] cluster is required as a cofactor.

It carries out the reaction isopentenyl diphosphate + 2 oxidized [2Fe-2S]-[ferredoxin] + H2O = (2E)-4-hydroxy-3-methylbut-2-enyl diphosphate + 2 reduced [2Fe-2S]-[ferredoxin] + 2 H(+). The catalysed reaction is dimethylallyl diphosphate + 2 oxidized [2Fe-2S]-[ferredoxin] + H2O = (2E)-4-hydroxy-3-methylbut-2-enyl diphosphate + 2 reduced [2Fe-2S]-[ferredoxin] + 2 H(+). The protein operates within isoprenoid biosynthesis; dimethylallyl diphosphate biosynthesis; dimethylallyl diphosphate from (2E)-4-hydroxy-3-methylbutenyl diphosphate: step 1/1. Its pathway is isoprenoid biosynthesis; isopentenyl diphosphate biosynthesis via DXP pathway; isopentenyl diphosphate from 1-deoxy-D-xylulose 5-phosphate: step 6/6. Catalyzes the conversion of 1-hydroxy-2-methyl-2-(E)-butenyl 4-diphosphate (HMBPP) into a mixture of isopentenyl diphosphate (IPP) and dimethylallyl diphosphate (DMAPP). Acts in the terminal step of the DOXP/MEP pathway for isoprenoid precursor biosynthesis. This Picosynechococcus sp. (strain ATCC 27264 / PCC 7002 / PR-6) (Agmenellum quadruplicatum) protein is 4-hydroxy-3-methylbut-2-enyl diphosphate reductase.